A 147-amino-acid chain; its full sequence is Large ribosomal subunit protein bL9 (147 aa).

This sequence belongs to the bacterial ribosomal protein bL9 family.

Its function is as follows. Binds to the 23S rRNA. This is Large ribosomal subunit protein bL9 from Bacteroides thetaiotaomicron (strain ATCC 29148 / DSM 2079 / JCM 5827 / CCUG 10774 / NCTC 10582 / VPI-5482 / E50).